Consider the following 342-residue polypeptide: Ferrochelatase (342 aa).

Histidine 188 and glutamate 268 together coordinate Fe cation.

It belongs to the ferrochelatase family.

The protein localises to the cytoplasm. The enzyme catalyses heme b + 2 H(+) = protoporphyrin IX + Fe(2+). The protein operates within porphyrin-containing compound metabolism; protoheme biosynthesis; protoheme from protoporphyrin-IX: step 1/1. Functionally, catalyzes the ferrous insertion into protoporphyrin IX. This is Ferrochelatase from Rickettsia prowazekii (strain Madrid E).